We begin with the raw amino-acid sequence, 358 residues long: tRNA N6-adenosine threonylcarbamoyltransferase (358 aa).

Residues His122 and His126 each coordinate Fe cation. Residues 145–149 (LVSGG), Asp178, Gly191, and Asn287 contribute to the substrate site. Asp315 provides a ligand contact to Fe cation.

Belongs to the KAE1 / TsaD family. It depends on Fe(2+) as a cofactor.

The protein resides in the cytoplasm. The enzyme catalyses L-threonylcarbamoyladenylate + adenosine(37) in tRNA = N(6)-L-threonylcarbamoyladenosine(37) in tRNA + AMP + H(+). In terms of biological role, required for the formation of a threonylcarbamoyl group on adenosine at position 37 (t(6)A37) in tRNAs that read codons beginning with adenine. Is involved in the transfer of the threonylcarbamoyl moiety of threonylcarbamoyl-AMP (TC-AMP) to the N6 group of A37, together with TsaE and TsaB. TsaD likely plays a direct catalytic role in this reaction. This Hydrogenovibrio crunogenus (strain DSM 25203 / XCL-2) (Thiomicrospira crunogena) protein is tRNA N6-adenosine threonylcarbamoyltransferase.